Here is a 152-residue protein sequence, read N- to C-terminus: Deoxyuridine 5'-triphosphate nucleotidohydrolase (152 aa).

Substrate-binding positions include 72–74 (RSG), N85, and 89–91 (TID).

It belongs to the dUTPase family. It depends on Mg(2+) as a cofactor.

The enzyme catalyses dUTP + H2O = dUMP + diphosphate + H(+). It participates in pyrimidine metabolism; dUMP biosynthesis; dUMP from dCTP (dUTP route): step 2/2. Its function is as follows. This enzyme is involved in nucleotide metabolism: it produces dUMP, the immediate precursor of thymidine nucleotides and it decreases the intracellular concentration of dUTP so that uracil cannot be incorporated into DNA. This Afipia carboxidovorans (strain ATCC 49405 / DSM 1227 / KCTC 32145 / OM5) (Oligotropha carboxidovorans) protein is Deoxyuridine 5'-triphosphate nucleotidohydrolase.